Reading from the N-terminus, the 248-residue chain is ATP synthase subunit a, chloroplastic (248 aa).

The next 5 helical transmembrane spans lie at 39-59 (QVLITSWVVIAILLGSSILAV), 96-116 (VPFIGTLFLFIFVSNWSGALF), 135-155 (INTTVALALLTSVAYFYAGLT), 200-220 (LVVVVLLSLVPLVVPIPVMFL), and 221-241 (GLFTSGIQALIFATLAAAYIG).

The protein belongs to the ATPase A chain family. F-type ATPases have 2 components, CF(1) - the catalytic core - and CF(0) - the membrane proton channel. CF(1) has five subunits: alpha(3), beta(3), gamma(1), delta(1), epsilon(1). CF(0) has four main subunits: a, b, b' and c.

The protein resides in the plastid. It localises to the chloroplast thylakoid membrane. In terms of biological role, key component of the proton channel; it plays a direct role in the translocation of protons across the membrane. The chain is ATP synthase subunit a, chloroplastic from Pelargonium hortorum (Common geranium).